The following is a 320-amino-acid chain: Ribosomal large subunit pseudouridine synthase C (320 aa).

Residues 23–95 enclose the S4 RNA-binding domain; it reads QRLDNFLLAK…TKLNKVAELE (73 aa). D147 is an active-site residue.

It belongs to the pseudouridine synthase RluA family.

It carries out the reaction uridine(955/2504/2580) in 23S rRNA = pseudouridine(955/2504/2580) in 23S rRNA. In terms of biological role, responsible for synthesis of pseudouridine from uracil at positions 955, 2504 and 2580 in 23S ribosomal RNA. The protein is Ribosomal large subunit pseudouridine synthase C (rluC) of Haemophilus ducreyi (strain 35000HP / ATCC 700724).